The sequence spans 187 residues: Transcription antitermination protein NusB (187 aa).

Residues 135–187 form a disordered region; sequence APAPESVAEEADEESSDSDAAASDPTDEGDVSDSSGASDEPAAPSAEIQPTVD. Over residues 141-151 the composition is skewed to acidic residues; sequence VAEEADEESSD.

This sequence belongs to the NusB family.

In terms of biological role, involved in transcription antitermination. Required for transcription of ribosomal RNA (rRNA) genes. Binds specifically to the boxA antiterminator sequence of the ribosomal RNA (rrn) operons. The polypeptide is Transcription antitermination protein NusB (Bifidobacterium longum subsp. infantis (strain ATCC 15697 / DSM 20088 / JCM 1222 / NCTC 11817 / S12)).